Here is a 492-residue protein sequence, read N- to C-terminus: Phytoene desaturase (lycopene-forming) (492 aa).

5 to 38 (VVIGAGFGGLALAIRLQAAGIPTVLLEQRDKPGG) serves as a coordination point for FAD.

Belongs to the carotenoid/retinoid oxidoreductase family. The cofactor is FAD.

It carries out the reaction 15-cis-phytoene + 4 A = all-trans-lycopene + 4 AH2. It participates in carotenoid biosynthesis; lycopene biosynthesis. This enzyme converts phytoene into lycopene via the intermediaries of phytofluene, zeta-carotene and neurosporene by the introduction of four double bonds. This is Phytoene desaturase (lycopene-forming) (crtI) from Pseudescherichia vulneris (Escherichia vulneris).